Reading from the N-terminus, the 188-residue chain is Elongation factor P (188 aa).

The protein belongs to the elongation factor P family.

The protein resides in the cytoplasm. Its pathway is protein biosynthesis; polypeptide chain elongation. Functionally, involved in peptide bond synthesis. Stimulates efficient translation and peptide-bond synthesis on native or reconstituted 70S ribosomes in vitro. Probably functions indirectly by altering the affinity of the ribosome for aminoacyl-tRNA, thus increasing their reactivity as acceptors for peptidyl transferase. The protein is Elongation factor P of Flavobacterium johnsoniae (strain ATCC 17061 / DSM 2064 / JCM 8514 / BCRC 14874 / CCUG 350202 / NBRC 14942 / NCIMB 11054 / UW101) (Cytophaga johnsonae).